Here is a 283-residue protein sequence, read N- to C-terminus: Diaminopimelate epimerase (283 aa).

Substrate is bound by residues Asn-13, Gln-45, and Asn-65. The Proton donor role is filled by Cys-74. Residues 75–76 (GN), Asn-156, Asn-190, and 208–209 (ER) contribute to the substrate site. Residue Cys-217 is the Proton acceptor of the active site. 218–219 (GS) contacts substrate.

Belongs to the diaminopimelate epimerase family. In terms of assembly, homodimer.

The protein localises to the cytoplasm. It catalyses the reaction (2S,6S)-2,6-diaminopimelate = meso-2,6-diaminopimelate. The protein operates within amino-acid biosynthesis; L-lysine biosynthesis via DAP pathway; DL-2,6-diaminopimelate from LL-2,6-diaminopimelate: step 1/1. Its function is as follows. Catalyzes the stereoinversion of LL-2,6-diaminopimelate (L,L-DAP) to meso-diaminopimelate (meso-DAP), a precursor of L-lysine and an essential component of the bacterial peptidoglycan. This Bartonella tribocorum (strain CIP 105476 / IBS 506) protein is Diaminopimelate epimerase.